The primary structure comprises 345 residues: Uroporphyrinogen decarboxylase (345 aa).

Substrate is bound by residues R24 to R28, D74, Y150, S205, and H318.

Belongs to the uroporphyrinogen decarboxylase family. In terms of assembly, homodimer.

The protein localises to the cytoplasm. The enzyme catalyses uroporphyrinogen III + 4 H(+) = coproporphyrinogen III + 4 CO2. It functions in the pathway porphyrin-containing compound metabolism; protoporphyrin-IX biosynthesis; coproporphyrinogen-III from 5-aminolevulinate: step 4/4. In terms of biological role, catalyzes the decarboxylation of four acetate groups of uroporphyrinogen-III to yield coproporphyrinogen-III. This Dichelobacter nodosus (strain VCS1703A) protein is Uroporphyrinogen decarboxylase.